A 79-amino-acid polypeptide reads, in one-letter code: Scutellin-5 (79 aa).

The N-terminal stretch at 1 to 24 is a signal peptide; sequence MSSGGLLLLLGLLTLWEVLTPVSS. Residues 31–79 form the BPTI/Kunitz inhibitor domain; that stretch reads YELPADIGPCEDFTGAFHYSPREHEYIEFIYGGCEGNANNFNTLEECET. C40 and C64 form a disulfide bridge.

Its subcellular location is the secreted. Functionally, serine protease inhibitor. This Oxyuranus scutellatus scutellatus (Australian taipan) protein is Scutellin-5.